A 252-amino-acid chain; its full sequence is 5-oxoprolinase subunit A (252 aa).

The protein belongs to the LamB/PxpA family. As to quaternary structure, forms a complex composed of PxpA, PxpB and PxpC.

The catalysed reaction is 5-oxo-L-proline + ATP + 2 H2O = L-glutamate + ADP + phosphate + H(+). Catalyzes the cleavage of 5-oxoproline to form L-glutamate coupled to the hydrolysis of ATP to ADP and inorganic phosphate. The protein is 5-oxoprolinase subunit A of Mycolicibacterium paratuberculosis (strain ATCC BAA-968 / K-10) (Mycobacterium paratuberculosis).